Here is a 309-residue protein sequence, read N- to C-terminus: Serine/threonine-protein phosphatase 2A catalytic subunit beta isoform (309 aa).

4 residues coordinate Mn(2+): Asp-57, His-59, Asp-85, and Asn-117. His-118 (proton donor) is an active-site residue. Mn(2+) is bound by residues His-167 and His-241. Tyr-307 bears the Phosphotyrosine mark. Leu-309 is modified (leucine methyl ester).

The protein belongs to the PPP phosphatase family. PP-1 subfamily. As to quaternary structure, PP2A consists of a common heterodimeric core enzyme (composed of a 36 kDa catalytic subunit (subunit C) and a 65 kDa constant regulatory subunit (PR65) (subunit A)) that associates with a variety of regulatory subunits. Proteins that associate with the core dimer include three families of regulatory subunits B (the R2/B/PR55/B55, R3/B''/PR72/PR130/PR59 and R5/B'/B56 families), the 48 kDa variable regulatory subunit, viral proteins, and cell signaling molecules. Binds PPME1. May indirectly interact with SGO1, most probably through regulatory B56 subunits. Found in a complex with at least ARL2, PPP2CB, PPP2R1A, PPP2R2A, PPP2R5E and TBCD. Interacts with TBCD. Interacts with CTTNBP2NL. Interacts with PTPA. Part of the core of STRIPAK complexes composed of PP2A catalytic and scaffolding subunits, the striatins (PP2A regulatory subunits), the striatin-associated proteins MOB4, STRIP1 and STRIP2, PDCD10 and members of the STE20 kinases, such as STK24 and STK26. Mn(2+) is required as a cofactor. Reversibly methyl esterified on Leu-309 by leucine carboxyl methyltransferase 1 (LCMT1) and protein phosphatase methylesterase 1 (PPME1). Carboxyl methylation influences the affinity of the catalytic subunit for the different regulatory subunits, thereby modulating the PP2A holoenzyme's substrate specificity, enzyme activity and cellular localization. In terms of processing, phosphorylation of either threonine (by autophosphorylation-activated protein kinase) or tyrosine results in inactivation of the phosphatase. Auto-dephosphorylation has been suggested as a mechanism for reactivation. Post-translationally, may be monoubiquitinated by NOSIP.

The protein resides in the cytoplasm. It localises to the nucleus. Its subcellular location is the chromosome. It is found in the centromere. The protein localises to the cytoskeleton. The protein resides in the spindle pole. It carries out the reaction O-phospho-L-seryl-[protein] + H2O = L-seryl-[protein] + phosphate. It catalyses the reaction O-phospho-L-threonyl-[protein] + H2O = L-threonyl-[protein] + phosphate. Catalytic subunit of protein phosphatase 2A (PP2A), a serine/threonine phosphatase involved in the regulation of a wide variety of enzymes, signal transduction pathways, and cellular events. PP2A can modulate the activity of phosphorylase B kinase, casein kinase 2, mitogen-stimulated S6 kinase, and MAP-2 kinase. Part of the striatin-interacting phosphatase and kinase (STRIPAK) complexes. STRIPAK complexes have critical roles in protein (de)phosphorylation and are regulators of multiple signaling pathways including Hippo, MAPK, nuclear receptor and cytoskeleton remodeling. Different types of STRIPAK complexes are involved in a variety of biological processes such as cell growth, differentiation, apoptosis, metabolism and immune regulation. The polypeptide is Serine/threonine-protein phosphatase 2A catalytic subunit beta isoform (PPP2CB) (Bos taurus (Bovine)).